Consider the following 108-residue polypeptide: Ig kappa chain V-V region HP 93G7 (108 aa).

A framework-1 region spans residues 1–23 (DIQMTQTTSSLSASLGDRVTISC). Cys23 and Cys88 are joined by a disulfide. Positions 24–34 (RASQDISNYLN) are complementarity-determining-1. The tract at residues 35–49 (WYQQKPDGTVKLLIY) is framework-2. The interval 50–56 (YTSRLHS) is complementarity-determining-2. The tract at residues 57-88 (GVPSRFSGSGSGTDYSLTISNLEQEDIATYFC) is framework-3. The complementarity-determining-3 stretch occupies residues 89-97 (QQGNMLPRT). The segment at 98–108 (FGGGTKLEIKR) is framework-4.

The chain is Ig kappa chain V-V region HP 93G7 from Mus musculus (Mouse).